A 270-amino-acid polypeptide reads, in one-letter code: Diaminopimelate epimerase (270 aa).

3 residues coordinate substrate: asparagine 15, glutamine 49, and asparagine 66. The active-site Proton donor is the cysteine 75. Residues glycine 76–asparagine 77, asparagine 155, asparagine 187, and glutamate 204–arginine 205 contribute to the substrate site. Cysteine 213 (proton acceptor) is an active-site residue. Substrate is bound at residue glycine 214–serine 215.

This sequence belongs to the diaminopimelate epimerase family. As to quaternary structure, homodimer.

The protein localises to the cytoplasm. It catalyses the reaction (2S,6S)-2,6-diaminopimelate = meso-2,6-diaminopimelate. It participates in amino-acid biosynthesis; L-lysine biosynthesis via DAP pathway; DL-2,6-diaminopimelate from LL-2,6-diaminopimelate: step 1/1. Functionally, catalyzes the stereoinversion of LL-2,6-diaminopimelate (L,L-DAP) to meso-diaminopimelate (meso-DAP), a precursor of L-lysine and an essential component of the bacterial peptidoglycan. In Rickettsia akari (strain Hartford), this protein is Diaminopimelate epimerase.